The following is a 368-amino-acid chain: Peptide chain release factor 2 (368 aa).

Gln250 carries the post-translational modification N5-methylglutamine.

This sequence belongs to the prokaryotic/mitochondrial release factor family. Post-translationally, methylated by PrmC. Methylation increases the termination efficiency of RF2.

It is found in the cytoplasm. Functionally, peptide chain release factor 2 directs the termination of translation in response to the peptide chain termination codons UGA and UAA. The sequence is that of Peptide chain release factor 2 from Mycolicibacterium vanbaalenii (strain DSM 7251 / JCM 13017 / BCRC 16820 / KCTC 9966 / NRRL B-24157 / PYR-1) (Mycobacterium vanbaalenii).